Consider the following 427-residue polypeptide: MGKRTRRFWALAFSLLMGALIYLGNTPSALAFTEEQKLLLQSWRLVNQSYLDETFNHQNWWLLREKYVKRPLRNREETYTAIEEMLATLDEPFTRLLRPEQYGNLQVTTTGELSGVGLQININPETNQLEIMAPLAGSPAEEAGLQPHDQILAIDGVDTQTLSLDEAAARMRGPKNTKVSLEILSAGTEVPQEFTLTRQLISLSPVAAQLDDSRPGQSVGYIRLSQFSANAYKEVAHALHQLEEQGADGYILDLRNNPGGLLQAGIDIARLWLPESTIVYTVNRQGTQESFTANGEAATDRPLVVLVNQGTASASEILAGALQDNQRATLVGEKTFGKGLIQSLFELSDGAGIAVTVAKYETPQHHDIHKLGIMPDEVVEQPLISFAEITSPADVQYQAALDLLTGGVAIAHKSSSIPAMATAHKPN.

The first 31 residues, 1 to 31, serve as a signal peptide directing secretion; it reads MGKRTRRFWALAFSLLMGALIYLGNTPSALA. The 83-residue stretch at 104-186 folds into the PDZ domain; sequence NLQVTTTGEL…TKVSLEILSA (83 aa). Residues S313, D324, and K338 each act as charge relay system in the active site.

Belongs to the peptidase S41A family.

Its subcellular location is the cellular thylakoid lumen. The catalysed reaction is The enzyme shows specific recognition of a C-terminal tripeptide, Xaa-Yaa-Zaa, in which Xaa is preferably Ala or Leu, Yaa is preferably Ala or Tyr, and Zaa is preferably Ala, but then cleaves at a variable distance from the C-terminus. A typical cleavage is -Ala-Ala-|-Arg-Ala-Ala-Lys-Glu-Asn-Tyr-Ala-Leu-Ala-Ala.. Functionally, cleavage of the 16 C-terminal residues from the D1 precursor of photosystem II (PSII). This proteolytic processing is necessary to allow the light-driven assembly of the oxygen-evolving cluster (a tetranuclear manganese), which is responsible for photosynthetic water oxidation. The chain is Carboxyl-terminal-processing protease (ctpA) from Synechocystis sp. (strain ATCC 27184 / PCC 6803 / Kazusa).